Here is a 480-residue protein sequence, read N- to C-terminus: Prostacyclin synthase (480 aa).

Residues 1–21 form a helical membrane-spanning segment; the sequence is MMWTALLLVGLSILVIVLYGR. Residues Arg104, Leu110, Asn277, 338-339, and Arg362 each bind substrate; that span reads TR. Cys421 provides a ligand contact to heme.

Belongs to the cytochrome P450 family. Heme serves as cofactor.

Its subcellular location is the endoplasmic reticulum membrane. The catalysed reaction is prostaglandin H2 = prostaglandin I2. It carries out the reaction a hydroperoxyeicosatetraenoate = an oxoeicosatetraenoate + H2O. The enzyme catalyses (15S)-hydroperoxy-(5Z,8Z,11Z,13E)-eicosatetraenoate = 15-oxo-(5Z,8Z,11Z,13E)-eicosatetraenoate + H2O. It catalyses the reaction (15S)-hydroperoxy-(5Z,8Z,11Z,13E)-eicosatetraenoate + AH2 = (15S)-hydroxy-(5Z,8Z,11Z,13E)-eicosatetraenoate + A + H2O. Functionally, catalyzes the isomerization of prostaglandin H2 to prostacyclin (= prostaglandin I2). Catalyzes the biosynthesis and metabolism of eicosanoids. Catalyzes the isomerization of prostaglandin H2 to prostacyclin (= prostaglandin I2), a potent mediator of vasodilation and inhibitor of platelet aggregation. Additionally, displays dehydratase activity, toward hydroperoxyeicosatetraenoates (HPETEs), especially toward (15S)-hydroperoxy-(5Z,8Z,11Z,13E)-eicosatetraenoate (15(S)-HPETE). This is Prostacyclin synthase from Danio rerio (Zebrafish).